Reading from the N-terminus, the 261-residue chain is DNA-directed RNA polymerase subunit Rpo3 (261 aa).

Belongs to the archaeal Rpo3/eukaryotic RPB3 RNA polymerase subunit family. In terms of assembly, part of the RNA polymerase complex.

Its subcellular location is the cytoplasm. It catalyses the reaction RNA(n) + a ribonucleoside 5'-triphosphate = RNA(n+1) + diphosphate. In terms of biological role, DNA-dependent RNA polymerase (RNAP) catalyzes the transcription of DNA into RNA using the four ribonucleoside triphosphates as substrates. This chain is DNA-directed RNA polymerase subunit Rpo3, found in Pyrococcus furiosus (strain ATCC 43587 / DSM 3638 / JCM 8422 / Vc1).